The chain runs to 367 residues: Alanine racemase (367 aa).

K40 (proton acceptor; specific for D-alanine) is an active-site residue. K40 bears the N6-(pyridoxal phosphate)lysine mark. Position 136 (R136) interacts with substrate. Residue Y263 is the Proton acceptor; specific for L-alanine of the active site. M310 lines the substrate pocket.

The protein belongs to the alanine racemase family. Pyridoxal 5'-phosphate is required as a cofactor.

It catalyses the reaction L-alanine = D-alanine. It functions in the pathway amino-acid biosynthesis; D-alanine biosynthesis; D-alanine from L-alanine: step 1/1. Functionally, catalyzes the interconversion of L-alanine and D-alanine. May also act on other amino acids. The polypeptide is Alanine racemase (alr) (Streptococcus pneumoniae (strain 70585)).